Here is a 363-residue protein sequence, read N- to C-terminus: Probable auxin efflux carrier component 5a (363 aa).

10 helical membrane-spanning segments follow: residues 7 to 27 (VYKV…GYGS), 39 to 59 (CDAV…FEFT), 72 to 92 (VAAD…WARF), 103 to 123 (SITS…VPMA), 134 to 154 (LVVQ…LFVL), 222 to 242 (FVGI…PSAF), 246 to 266 (VLIM…LFMA), 281 to 301 (LGLV…SIAV), 307 to 327 (VLRV…FIFA), and 342 to 362 (IFGM…LELI).

This sequence belongs to the auxin efflux carrier (TC 2.A.69.1) family. In terms of tissue distribution, expressed in leaves, shoot apex and panicles. Expressed in roots, stem bases, stems, leaves and young panicles.

Its subcellular location is the membrane. May act as a component of the auxin efflux carrier. This is Probable auxin efflux carrier component 5a from Oryza sativa subsp. japonica (Rice).